A 103-amino-acid polypeptide reads, in one-letter code: Co-chaperonin GroES (103 aa).

The protein belongs to the GroES chaperonin family. As to quaternary structure, heptamer of 7 subunits arranged in a ring. Interacts with the chaperonin GroEL.

The protein localises to the cytoplasm. In terms of biological role, together with the chaperonin GroEL, plays an essential role in assisting protein folding. The GroEL-GroES system forms a nano-cage that allows encapsulation of the non-native substrate proteins and provides a physical environment optimized to promote and accelerate protein folding. GroES binds to the apical surface of the GroEL ring, thereby capping the opening of the GroEL channel. This is Co-chaperonin GroES from Crocosphaera subtropica (strain ATCC 51142 / BH68) (Cyanothece sp. (strain ATCC 51142)).